Consider the following 178-residue polypeptide: Large ribosomal subunit protein uL6 (178 aa).

The protein belongs to the universal ribosomal protein uL6 family. Part of the 50S ribosomal subunit.

Its function is as follows. This protein binds to the 23S rRNA, and is important in its secondary structure. It is located near the subunit interface in the base of the L7/L12 stalk, and near the tRNA binding site of the peptidyltransferase center. The protein is Large ribosomal subunit protein uL6 of Thermobifida fusca (strain YX).